The following is a 1024-amino-acid chain: Probable serine/threonine-protein kinase DDB_G0271682 (1024 aa).

The segment at 187-261 is disordered; sequence NIDNNNNNNN…RDNENNHNHQ (75 aa). The segment covering 190–244 has biased composition (low complexity); the sequence is NNNNNNNNNNNNNNNNNNNNNNNNNNNNNNNNNNNNNNNNNNNNNNNNNNNNNNN. Residues 250-261 show a composition bias toward basic and acidic residues; it reads RSRDNENNHNHQ. Protein kinase domains are found at residues 360–609 and 645–1018; these read LLFI…LKLM and ILVT…ELLI. Residues 366 to 374 and Lys387 contribute to the ATP site; that span reads IGSGACGEV. The active-site Proton acceptor is Asp484. Residues 651 to 659 and Lys719 contribute to the ATP site; that span reads VGGNVSGNV. 2 stretches are compositionally biased toward low complexity: residues 823 to 851 and 862 to 874; these read NNNS…NNNN and ENTN…TTTT. Residues 823–874 are disordered; the sequence is NNNSNQNNNNNNNNNNNNNNNNNNNNNNNKKNDGGDDNGENTNTTTTTTTTT.

It belongs to the protein kinase superfamily. TKL Ser/Thr protein kinase family.

The catalysed reaction is L-seryl-[protein] + ATP = O-phospho-L-seryl-[protein] + ADP + H(+). The enzyme catalyses L-threonyl-[protein] + ATP = O-phospho-L-threonyl-[protein] + ADP + H(+). This Dictyostelium discoideum (Social amoeba) protein is Probable serine/threonine-protein kinase DDB_G0271682.